The following is a 106-amino-acid chain: MNDSEFHQLADELMLQLEETLDRFEGDADIDYETNGGVMTLSFENGSKIVINRQEPLHQIWLATKAGGYHFNRQETRWICDRSGEDFITLLSSACSTQAGETVRFE.

It belongs to the frataxin family.

In terms of biological role, involved in iron-sulfur (Fe-S) cluster assembly. May act as a regulator of Fe-S biogenesis. This chain is Iron-sulfur cluster assembly protein CyaY, found in Pectobacterium carotovorum subsp. carotovorum (strain PC1).